The sequence spans 99 residues: DNA-binding protein Fis (99 aa).

Residues 75–94 constitute a DNA-binding region (H-T-H motif); that stretch reads QTRAATMLGINRGTLRKKLK.

It belongs to the transcriptional regulatory Fis family. In terms of assembly, homodimer.

Functionally, activates ribosomal RNA transcription. Plays a direct role in upstream activation of rRNA promoters. In Pasteurella multocida (strain Pm70), this protein is DNA-binding protein Fis.